A 1072-amino-acid polypeptide reads, in one-letter code: Carbamoyl phosphate synthase large chain (1072 aa).

Residues 1–401 (MPKRLDINTI…SLLKAVRSLE (401 aa)) form a carboxyphosphate synthetic domain region. ATP is bound by residues Arg129, Arg169, Gly175, Gly176, Lys208, Ile210, Glu215, Gly241, Val242, His243, Gln284, and Glu298. One can recognise an ATP-grasp 1 domain in the interval 133–327 (RTLMQDLNEP…IAKLAAKIAV (195 aa)). Residues Gln284, Glu298, and Asn300 each contribute to the Mg(2+) site. Mn(2+) is bound by residues Gln284, Glu298, and Asn300. Residues 402-546 (LGIYHLELDH…YSTYADENES (145 aa)) form an oligomerization domain region. The tract at residues 547–929 (IVTDRKSVVV…ALYKGLVASG (383 aa)) is carbamoyl phosphate synthetic domain. The ATP-grasp 2 domain maps to 671–861 (EAALTKLGIP…MANVATKVIL (191 aa)). The ATP site is built by Arg707, Arg746, Glu752, Gly777, Val778, His779, Ser780, Gln820, and Glu832. Mg(2+)-binding residues include Gln820, Glu832, and Asn834. Positions 820, 832, and 834 each coordinate Mn(2+). Residues 930–1072 (INIPTHGSVI…QTKRHEVVHA (143 aa)) form the MGS-like domain. Residues 930-1072 (INIPTHGSVI…QTKRHEVVHA (143 aa)) are allosteric domain.

The protein belongs to the CarB family. Composed of two chains; the small (or glutamine) chain promotes the hydrolysis of glutamine to ammonia, which is used by the large (or ammonia) chain to synthesize carbamoyl phosphate. Tetramer of heterodimers (alpha,beta)4. The cofactor is Mg(2+). Mn(2+) serves as cofactor.

It carries out the reaction hydrogencarbonate + L-glutamine + 2 ATP + H2O = carbamoyl phosphate + L-glutamate + 2 ADP + phosphate + 2 H(+). The catalysed reaction is hydrogencarbonate + NH4(+) + 2 ATP = carbamoyl phosphate + 2 ADP + phosphate + 2 H(+). The protein operates within amino-acid biosynthesis; L-arginine biosynthesis; carbamoyl phosphate from bicarbonate: step 1/1. It participates in pyrimidine metabolism; UMP biosynthesis via de novo pathway; (S)-dihydroorotate from bicarbonate: step 1/3. In terms of biological role, large subunit of the glutamine-dependent carbamoyl phosphate synthetase (CPSase). CPSase catalyzes the formation of carbamoyl phosphate from the ammonia moiety of glutamine, carbonate, and phosphate donated by ATP, constituting the first step of 2 biosynthetic pathways, one leading to arginine and/or urea and the other to pyrimidine nucleotides. The large subunit (synthetase) binds the substrates ammonia (free or transferred from glutamine from the small subunit), hydrogencarbonate and ATP and carries out an ATP-coupled ligase reaction, activating hydrogencarbonate by forming carboxy phosphate which reacts with ammonia to form carbamoyl phosphate. The sequence is that of Carbamoyl phosphate synthase large chain from Bacillus cereus (strain ATCC 14579 / DSM 31 / CCUG 7414 / JCM 2152 / NBRC 15305 / NCIMB 9373 / NCTC 2599 / NRRL B-3711).